The chain runs to 179 residues: Guanosine-3',5'-bis(diphosphate) 3'-pyrophosphohydrolase MESH1 (179 aa).

The HD domain occupies 32-127; it reads YINHPLGVAR…VKLADKLYNL (96 aa). Mn(2+) contacts are provided by His-35, His-61, and Asp-62. Active-site nucleophile residues include Glu-65 and Asp-66. Asp-122 contributes to the Mn(2+) binding site.

The protein belongs to the MESH1 family. Requires Mn(2+) as cofactor.

The enzyme catalyses guanosine 3',5'-bis(diphosphate) + H2O = GDP + diphosphate + H(+). PpGpp hydrolyzing enzyme involved in starvation response. This chain is Guanosine-3',5'-bis(diphosphate) 3'-pyrophosphohydrolase MESH1 (hddc3), found in Xenopus tropicalis (Western clawed frog).